The chain runs to 145 residues: Large ribosomal subunit protein uL15 (145 aa).

The segment covering Met-1–Gly-13 has biased composition (basic residues). Residues Met-1–Trp-44 are disordered.

It belongs to the universal ribosomal protein uL15 family. In terms of assembly, part of the 50S ribosomal subunit.

Functionally, binds to the 23S rRNA. This Methanobrevibacter smithii (strain ATCC 35061 / DSM 861 / OCM 144 / PS) protein is Large ribosomal subunit protein uL15.